A 334-amino-acid chain; its full sequence is UDP-N-acetylglucosamine--N-acetylmuramyl-(pentapeptide) pyrophosphoryl-undecaprenol N-acetylglucosamine transferase (334 aa).

UDP-N-acetyl-alpha-D-glucosamine is bound by residues 11-13 (TGG), Asn125, Ser185, Ile229, and Gln274.

This sequence belongs to the glycosyltransferase 28 family. MurG subfamily.

It is found in the cell inner membrane. The enzyme catalyses di-trans,octa-cis-undecaprenyl diphospho-N-acetyl-alpha-D-muramoyl-L-alanyl-D-glutamyl-meso-2,6-diaminopimeloyl-D-alanyl-D-alanine + UDP-N-acetyl-alpha-D-glucosamine = di-trans,octa-cis-undecaprenyl diphospho-[N-acetyl-alpha-D-glucosaminyl-(1-&gt;4)]-N-acetyl-alpha-D-muramoyl-L-alanyl-D-glutamyl-meso-2,6-diaminopimeloyl-D-alanyl-D-alanine + UDP + H(+). It functions in the pathway cell wall biogenesis; peptidoglycan biosynthesis. Cell wall formation. Catalyzes the transfer of a GlcNAc subunit on undecaprenyl-pyrophosphoryl-MurNAc-pentapeptide (lipid intermediate I) to form undecaprenyl-pyrophosphoryl-MurNAc-(pentapeptide)GlcNAc (lipid intermediate II). The protein is UDP-N-acetylglucosamine--N-acetylmuramyl-(pentapeptide) pyrophosphoryl-undecaprenol N-acetylglucosamine transferase of Thermosipho melanesiensis (strain DSM 12029 / CIP 104789 / BI429).